We begin with the raw amino-acid sequence, 419 residues long: Multifunctional CCA protein (419 aa).

Gly8 and Arg11 together coordinate ATP. CTP contacts are provided by Gly8 and Arg11. Asp21 and Asp23 together coordinate Mg(2+). ATP-binding residues include Arg91, Arg149, and Arg152. The CTP site is built by Arg91, Arg149, and Arg152. The HD domain maps to Cys238–Phe339.

This sequence belongs to the tRNA nucleotidyltransferase/poly(A) polymerase family. Bacterial CCA-adding enzyme type 1 subfamily. In terms of assembly, monomer. Can also form homodimers and oligomers. The cofactor is Mg(2+). It depends on Ni(2+) as a cofactor.

The enzyme catalyses a tRNA precursor + 2 CTP + ATP = a tRNA with a 3' CCA end + 3 diphosphate. It carries out the reaction a tRNA with a 3' CCA end + 2 CTP + ATP = a tRNA with a 3' CCACCA end + 3 diphosphate. Catalyzes the addition and repair of the essential 3'-terminal CCA sequence in tRNAs without using a nucleic acid template. Adds these three nucleotides in the order of C, C, and A to the tRNA nucleotide-73, using CTP and ATP as substrates and producing inorganic pyrophosphate. tRNA 3'-terminal CCA addition is required both for tRNA processing and repair. Also involved in tRNA surveillance by mediating tandem CCA addition to generate a CCACCA at the 3' terminus of unstable tRNAs. While stable tRNAs receive only 3'-terminal CCA, unstable tRNAs are marked with CCACCA and rapidly degraded. In Variovorax paradoxus (strain S110), this protein is Multifunctional CCA protein.